Consider the following 397-residue polypeptide: Elongation factor Tu (397 aa).

One can recognise a tr-type G domain in the interval 10-206 (KPHVNIGTIG…AVDESIPDPV (197 aa)). The interval 19 to 26 (GHVDHGKT) is G1. GTP is bound at residue 19–26 (GHVDHGKT). Thr-26 is a Mg(2+) binding site. A G2 region spans residues 62-66 (GITIN). Residues 83 to 86 (DAPG) form a G3 region. GTP-binding positions include 83-87 (DAPGH) and 138-141 (NKSD). Residues 138-141 (NKSD) form a G4 region. The interval 176–178 (SAL) is G5.

This sequence belongs to the TRAFAC class translation factor GTPase superfamily. Classic translation factor GTPase family. EF-Tu/EF-1A subfamily. As to quaternary structure, monomer.

The protein localises to the cytoplasm. It carries out the reaction GTP + H2O = GDP + phosphate + H(+). In terms of biological role, GTP hydrolase that promotes the GTP-dependent binding of aminoacyl-tRNA to the A-site of ribosomes during protein biosynthesis. This Mycobacteroides abscessus (strain ATCC 19977 / DSM 44196 / CCUG 20993 / CIP 104536 / JCM 13569 / NCTC 13031 / TMC 1543 / L948) (Mycobacterium abscessus) protein is Elongation factor Tu.